The sequence spans 81 residues: Cytotoxin 8 (81 aa).

Positions 1-21 (MKTLLLTLVVVTIVCLDLGYT) are cleaved as a signal peptide. Disulfide bonds link C24-C42, C35-C59, C63-C74, and C75-C80.

It belongs to the three-finger toxin family. Short-chain subfamily. Type IA cytotoxin sub-subfamily. Monomer in solution; Homodimer and oligomer in the presence of negatively charged lipids forming a pore with a size ranging between 20 and 30 Angstroms. As to expression, expressed by the venom gland.

The protein resides in the secreted. The protein localises to the target cell membrane. Its function is as follows. Shows cytolytic activity on many different cells by forming pore in lipid membranes. In vivo, increases heart rate or kills the animal by cardiac arrest. In addition, it binds to heparin with high affinity, interacts with Kv channel-interacting protein 1 (KCNIP1) in a calcium-independent manner, and binds to integrin alpha-V/beta-3 (ITGAV/ITGB3) with moderate affinity. The sequence is that of Cytotoxin 8 from Naja atra (Chinese cobra).